Here is a 625-residue protein sequence, read N- to C-terminus: MKSVPLISGGLSLFLSACSGGGGSFDVDDVSNPSSSKPRYQDDTSNQRKKSNLEKLSIPSLGGGMKLVAQNLRGREPSLLNEDGYIIFSSLSKIEDDFKKENQSQEPTIGSIDEPSETNSPQNHHGQQYVYSGLYYIQSWRNFSNGKFYSGYYGYAYYFGKQTATTLPVNGEATYKGTWSFITATERGKNYSLFSNSSGQGYSRRSAISEDIDLENDQNNGETGLISQFSADFGTKKLKGELFYTKRKTNNQNYEKKKLYDIDANIYSNRFRGKVKPTEKDSEEHPFTREGTLEGGFYGPNGEELGGKFLAGDKKVFGVFSAKETEETKQKTLPKETLIDGKLTTFSTKKPDATTSTTANAKTDATTNAENFTTKDISSFGEADYLLIDNYPVPLLPETENSGDFATSKHYEVRDKTYKVEACCKNLSYVKFGMYYEDNKKNNKNETEQYHQFLLGLRTASSKIPTTGNVKYRGSWFGYISDGETSYSTTGDKRQDKNAVAEFDVNFAEKTLKGSLKRADSQNPVFSIEANFKNGGNAFTGTATAKDLVIDGKNSQTKNTPINITTKVNGAFYGPNASELGGYFTYNGKNPTDKNSPTASSPSNSEKARAAVVFGAKKQVETNNK.

An N-terminal signal peptide occupies residues 1-17 (MKSVPLISGGLSLFLSA). Residue cysteine 18 is the site of N-palmitoyl cysteine attachment. Residue cysteine 18 is the site of S-diacylglycerol cysteine attachment. Disordered regions lie at residues 25–52 (FDVD…KKSN), 99–125 (KKEN…QNHH), 275–298 (VKPT…GGFY), and 584–610 (FTYN…KARA). Positions 276 to 292 (KPTEKDSEEHPFTREGT) are enriched in basic and acidic residues. The span at 587-605 (NGKNPTDKNSPTASSPSNS) shows a compositional bias: polar residues.

It belongs to the TbpB family.

The protein resides in the cell outer membrane. The protein localises to the cell surface. Haemophilus acquires iron by extracting it from serum transferrin (TF) in its human host. Acts as a transferrin receptor and is required for transferrin utilization. The protein is Transferrin-binding protein B (tbpB) of Haemophilus influenzae (strain ATCC 51907 / DSM 11121 / KW20 / Rd).